The following is a 431-amino-acid chain: Mannan endo-1,4-beta-mannosidase 7 (431 aa).

A signal peptide spans 1–25 (MKLLALFPFLAIVIQLSCWELGTDA). Positions 87 and 202 each coordinate substrate. E203 acts as the Proton donor in catalysis. Y280 is a substrate binding site. Residue E320 is the Nucleophile of the active site. Residue W362 participates in substrate binding.

The protein belongs to the glycosyl hydrolase 5 (cellulase A) family. In terms of tissue distribution, expressed in stems, flowers, siliques and seeds. Expressed in root vasculature, leaf hydathodes, anther filaments, stigma, sepal vasculature, at the base and apical parts of siliques, and replum. Expressed in the micropylar endosperm and radicle tip in early germinating seeds.

It is found in the secreted. It catalyses the reaction Random hydrolysis of (1-&gt;4)-beta-D-mannosidic linkages in mannans, galactomannans and glucomannans.. In terms of biological role, required for both, loosening of the micropylar endosperm, and rupture of the seed coat in germinating seeds. May participate in the hydrolysis of the mannans in the cell wall of germinating seeds. The polypeptide is Mannan endo-1,4-beta-mannosidase 7 (MAN7) (Arabidopsis thaliana (Mouse-ear cress)).